We begin with the raw amino-acid sequence, 454 residues long: ABSCISIC ACID-INSENSITIVE 5-like protein 6 (454 aa).

Phosphoserine is present on residues S32, S55, and S126. Phosphothreonine is present on T169. A bZIP domain is found at 372-435 (IERRQKRMIK…KNQLLEPLRQ (64 aa)). The interval 374–393 (RRQKRMIKNRESAARSRARK) is basic motif. The tract at residues 400-414 (LEAEIAQLKELNEEL) is leucine-zipper.

The protein belongs to the bZIP family. ABI5 subfamily. In terms of assembly, DNA-binding heterodimer. Interacts with ABI3 and the AFP proteins AFP1, AFP2, AFP3 and AFP4. As to expression, expressed in roots and flowers.

The protein localises to the nucleus. Functionally, binds to the ABA-responsive element (ABRE). Mediates stress-responsive ABA signaling. This is ABSCISIC ACID-INSENSITIVE 5-like protein 6 (ABF3) from Arabidopsis thaliana (Mouse-ear cress).